Reading from the N-terminus, the 329-residue chain is BTB/POZ domain-containing adapter for CUL3-mediated RhoA degradation protein 1 (329 aa).

A disordered region spans residues 1-31 (MSAEASGPAPAAAECLESPSPSSVEPGSPSY). One can recognise a BTB domain in the interval 41–109 (KYVKLNVGGS…LRDGSVPLPE (69 aa)).

Belongs to the BACURD family. Homotetramer; forms a two-fold symmetric tetramer in solution. Interacts with CUL3; interaction is direct and forms a 5:5 heterodecamer. Component of the BCR(KCTD13) E3 ubiquitin ligase complex, at least composed of CUL3, KCTD13/BACURD1 and RBX1. Interacts with RHOA; with a preference for RhoA-GDP. Interacts with POLD2 and PCNA. Interacts with SPRTN.

The protein resides in the nucleus. It participates in protein modification; protein ubiquitination. Its function is as follows. Substrate-specific adapter of a BCR (BTB-CUL3-RBX1) E3 ubiquitin-protein ligase complex required for synaptic transmission. The BCR(KCTD13) E3 ubiquitin ligase complex mediates the ubiquitination of RHOA, leading to its degradation by the proteasome, thereby regulating the actin cytoskeleton and promoting synaptic transmission. The chain is BTB/POZ domain-containing adapter for CUL3-mediated RhoA degradation protein 1 (Kctd13) from Mus musculus (Mouse).